The chain runs to 163 residues: Nucleotide-binding protein APJL_1242 (163 aa).

This sequence belongs to the YajQ family.

In terms of biological role, nucleotide-binding protein. The sequence is that of Nucleotide-binding protein APJL_1242 from Actinobacillus pleuropneumoniae serotype 3 (strain JL03).